Consider the following 328-residue polypeptide: Phospholipid scramblase 1 (328 aa).

The interval 1–93 is proline-rich domain (PRD); it reads MENHSKQTEA…NHPGGPGGTP (93 aa). The interval 1 to 96 is disordered; it reads MENHSKQTEA…GGPGGTPWMP (96 aa). Topologically, residues 1–297 are cytoplasmic; sequence MENHSKQTEA…IQFPLDLDVK (297 aa). Residues 18–26 carry the SH3-binding 1 motif; that stretch reads PAGYPPPYP. The short motif at 22 to 25 is the PPxY motif element; it reads PPPY. Low complexity predominate over residues 28 to 47; the sequence is AAFQGPSDHAAYPIPQAGYQ. The segment covering 49–64 has biased composition (pro residues); the sequence is PPGPYPGPQPGYPVPP. The SH3-binding 2 signature appears at 56 to 64; it reads PQPGYPVPP. The residue at position 83 (tyrosine 83) is a Phosphotyrosine; by ABL. The SH3-binding 3 motif lies at 93-101; sequence PWMPAPPPP. At threonine 170 the chain carries Phosphothreonine; by PKC/PRKCD. S-palmitoyl cysteine attachment occurs at residues cysteine 193, cysteine 194, cysteine 197, and cysteine 198. The Nuclear localization signal motif lies at 269-275; the sequence is SKQWSGF. Residues 298–314 form a helical membrane-spanning segment; the sequence is MKAVMLGACFLIDFMFF. Residues 315–328 are Extracellular-facing; it reads ERTGNEEQRSGAWQ.

This sequence belongs to the phospholipid scramblase family. As to quaternary structure, forms homooligomers in the presence of calcium. Interacts with ABL. Interacts with RELT, RELL1 and RELL2. Interacts with OXSR1 in the presence of RELT. Interacts with OCLN, TOP2A and TOP2B. Interacts with TRPC1, TRPC4 and TRPC5. Interacts with ILDR1. Requires Ca(2+) as cofactor. It depends on Mg(2+) as a cofactor. Zn(2+) serves as cofactor. In terms of processing, phosphorylation at Thr-170 by PKC/PKCD increases its phospholipid scramblase activity during both cell stimulation and apoptosis. Phosphorylated by OXSR1 in the presence of RELT. Palmitoylation is required for its phospholipid scramblase activity. Palmitoylation regulates its localization to the cell membrane or the nucleus; trafficking to the cell membrane is dependent upon palmitoylation whereas in the absence of palmitoylation, localizes to the nucleus. In terms of tissue distribution, highly expressed in kidney, lung, liver and bone marrow, slightly in spleen, heart and macrophage.

It localises to the cell membrane. The protein localises to the nucleus. It is found in the cytoplasm. Its subcellular location is the perinuclear region. It catalyses the reaction a 1,2-diacyl-sn-glycero-3-phosphocholine(in) = a 1,2-diacyl-sn-glycero-3-phosphocholine(out). The catalysed reaction is a 1,2-diacyl-sn-glycero-3-phosphoethanolamine(in) = a 1,2-diacyl-sn-glycero-3-phosphoethanolamine(out). It carries out the reaction a 1,2-diacyl-sn-glycero-3-phospho-L-serine(in) = a 1,2-diacyl-sn-glycero-3-phospho-L-serine(out). Its function is as follows. Catalyzes calcium-induced ATP-independent rapid bidirectional and non-specific distribution of phospholipids (lipid scrambling or lipid flip-flop) between the inner and outer leaflet of the plasma membrane resulting in collapse of the phospholipid asymmetry which leads to phosphatidylserine externalization on the cell surface. Mediates calcium-dependent phosphatidylserine externalization and apoptosis in neurons via its association with TRPC5. Also exhibits magnesium-dependent nuclease activity against double-stranded DNA and RNA but not single-stranded DNA and can enhance DNA decatenation mediated by TOP2A. Negatively regulates FcR-mediated phagocytosis in differentiated macrophages. May contribute to cytokine-regulated cell proliferation and differentiation. The protein is Phospholipid scramblase 1 (Plscr1) of Mus musculus (Mouse).